The chain runs to 621 residues: 1-deoxy-D-xylulose-5-phosphate synthase (621 aa).

Residues H80 and 121-123 (GHS) each bind thiamine diphosphate. D152 contributes to the Mg(2+) binding site. Thiamine diphosphate-binding positions include 153-154 (GA), N181, Y288, and E370. Residue N181 coordinates Mg(2+).

It belongs to the transketolase family. DXPS subfamily. Homodimer. Requires Mg(2+) as cofactor. It depends on thiamine diphosphate as a cofactor.

The catalysed reaction is D-glyceraldehyde 3-phosphate + pyruvate + H(+) = 1-deoxy-D-xylulose 5-phosphate + CO2. It functions in the pathway metabolic intermediate biosynthesis; 1-deoxy-D-xylulose 5-phosphate biosynthesis; 1-deoxy-D-xylulose 5-phosphate from D-glyceraldehyde 3-phosphate and pyruvate: step 1/1. Functionally, catalyzes the acyloin condensation reaction between C atoms 2 and 3 of pyruvate and glyceraldehyde 3-phosphate to yield 1-deoxy-D-xylulose-5-phosphate (DXP). This is 1-deoxy-D-xylulose-5-phosphate synthase from Serratia proteamaculans (strain 568).